A 666-amino-acid polypeptide reads, in one-letter code: Spartin (666 aa).

Position 1 is an N-acetylmethionine (M1). Residues 16 to 94 (IREAYKKAFL…LQNVRTRLEI (79 aa)) form the MIT domain. The segment at 124–156 (EKLPEPQSFSSAPQHAEVNGNTSTPSAGAVAAP) is disordered. Residues 146–156 (STPSAGAVAAP) are compositionally biased toward low complexity. The ubiquitin-binding region (UBR) domain stretch occupies residues 190-380 (DSGEFSSVGE…QLDQGNKDVR (191 aa)). The LC3-interacting region (LIR); mediates interaction with MAP1LC3A AND MAP1LC3C signature appears at 193–200 (EFSSVGEE). The segment at 344 to 398 (EENEFQIPGRTRPSSDQLKEASGTDVKQLDQGNKDVRHKGKRGKRAKDTSSEEVN) is disordered. K362 participates in a covalent cross-link: Glycyl lysine isopeptide (Lys-Gly) (interchain with G-Cter in ubiquitin). The span at 379-388 (VRHKGKRGKR) shows a compositional bias: basic residues. Positions 427–611 (ILSGASWVSW…YNINNIGIKA (185 aa)) constitute a Senescence domain. Positions 431-503 (ASWVSWGLVK…LVDGVCTVAN (73 aa)) are required for localization to lipid droplets. S470 is subject to Phosphoserine. A disordered region spans residues 636-666 (RENQEGAANVNVRGEKDEQTKEVKEAKKKDK). Residues 648 to 666 (RGEKDEQTKEVKEAKKKDK) show a composition bias toward basic and acidic residues.

In terms of assembly, interacts with ITCH and WWP1. Interacts (via MIT domain) with IST1; leading to the recruitment of SPART to midbodies. Interacts with MAP1LC3A and MAP1LC3C. In terms of processing, ubiquitinated; ubiquitination does not require ITCH and WWP1. As to expression, ubiquitously expressed, with highest levels of expression detected in adipose tissue.

The protein localises to the cytoplasm. It localises to the midbody. It is found in the lipid droplet. Lipophagy receptor that plays an important role in lipid droplet (LD) turnover in motor neurons. Localizes to LDs and interacts with components of the autophagy machinery, such as MAP1LC3A/C proteins to deliver LDs to autophagosomes for degradation via lipophagy. Lipid transfer protein required for lipid droplet degradation, including by lipophagy. Can bind and transfer all lipid species found in lipid droplets, from phospholipids to triglycerides and sterol esters but the direction of lipid transfer by spartin and its cargos are unknown. May be implicated in endosomal trafficking, or microtubule dynamics, or both. Participates in cytokinesis. In Homo sapiens (Human), this protein is Spartin.